The primary structure comprises 205 residues: Spermatogenesis-associated protein 24 (205 aa).

Residues 17-167 are a coiled coil; sequence LAFDQLRDVI…QKQNFRNHIS (151 aa). A required for interaction with CBX5 and TBPL1 region spans residues 138-185; it reads EDILNGKENEIKELQQVISQQKQNFRNHISDFRIQKQQETYMAQVLDQ. The tract at residues 185-205 is disordered; the sequence is QKRKKATGMRRARSRQCSREK. Residues 186-205 show a composition bias toward basic residues; sequence KRKKATGMRRARSRQCSREK.

This sequence belongs to the SPATA24 family. As to quaternary structure, homodimer. Interacts with CBX3, CBX5, GMNN, GTF2B, TBPL1 and the polycomb proteins PHCF2, RNF2 and SCMH1 but not with CBX1 or PCGF2. In terms of tissue distribution, testis-specific (at protein level).

Its subcellular location is the cytoplasm. It is found in the nucleus. The protein localises to the nucleolus. The protein resides in the nucleoplasm. Its function is as follows. Binds DNA with high affinity but does not bind to TATA boxes. Synergises with GMNN and TBP in activation of TATA box-containing promoters and with GMNN and TBPL1 in activation of the NF1 TATA-less promoter. May play a role in cytoplasm movement and removal during spermiogenesis. The protein is Spermatogenesis-associated protein 24 (Spata24) of Mus musculus (Mouse).